The chain runs to 706 residues: Zinc transporter foi (706 aa).

A signal peptide spans 1-21 (MARHIMAVCVVCLLCAHRLHC). Topologically, residues 22 to 261 (QDHIESLLGP…EKDKDIFYVW (240 aa)) are extracellular. A compositionally biased stretch (polar residues) spans 40–56 (QDQLNARVYTNLSPSSE). A disordered region spans residues 40–101 (QDQLNARVYT…HGPTSESRVP (62 aa)). 6 N-linked (GlcNAc...) asparagine glycosylation sites follow: asparagine 74, asparagine 119, asparagine 176, asparagine 182, asparagine 196, and asparagine 207. A helical transmembrane segment spans residues 262-282 (IYAFISVFACGILGLVGVAII). At 283-292 (PFMGSRYYKY) the chain is on the cytoplasmic side. Residues 293 to 313 (IIQYLVALAVGTMTGDALLHL) form a helical membrane-spanning segment. Residues 314 to 329 (LPHSLAGQDERGMIMK) lie on the Extracellular side of the membrane. Residues 330-350 (GLGCLGGIIFFYVMEHALTMI) traverse the membrane as a helical segment. The Cytoplasmic portion of the chain corresponds to 351 to 604 (SEWRKSVEKK…LIKAGMSVKS (254 aa)). Residues serine 376, serine 377, and serine 381 each carry the phosphoserine modification. The helical transmembrane segment at 605 to 625 (AVYYNLLTGVLSFIGMIFGIA) threads the bilayer. Residues 626-631 (FGQSQD) lie on the Extracellular side of the membrane. The chain crosses the membrane as a helical span at residues 632–652 (VAQWMFAVAAGLFIYIALVDM). Topologically, residues 653 to 665 (MPEISASHKSLGQ) are cytoplasmic. Residues 666–686 (FLLQILGMLSGVGIMLLIALY) traverse the membrane as a helical segment. The Extracellular portion of the chain corresponds to 687-706 (EGDLMSAFGTAGAASHQHAH).

It belongs to the ZIP transporter (TC 2.A.5) family. Glycosylated. In terms of tissue distribution, maternal foi has almost completely disappeared by embryonic stage 3 except in the pole cells. In stage 6 embryos, expression is enriched in the invaginating mesoderm. In stage 9 embryos, high levels in the anterior and posterior midgut primordia. In stage 14 embryos, broad expression with low levels in the epidermis.

The protein localises to the cell membrane. Its function is as follows. Required for the normal migration of longitudinal and peripheral glial cells. During larval development, required for the migration of the subretinal glia into the eye disk. During embryonic development, also controls the migration of muscle cells toward their attachment sites. Required in the mesoderm for the correct morphogenesis of embryonic gonad and for tracheal branch fusion during tracheal development. Shg may be cooperating with foi to mediate a common mechanism for gonad and tracheal morphogenesis. Acts as a zinc transporter in both yeast and mammalian cells. In Drosophila melanogaster (Fruit fly), this protein is Zinc transporter foi.